Consider the following 189-residue polypeptide: MKRLIVGISGASGAIYGVRLLQILRDVDSVETHLVMSQAARQTLALETHFSLREVQALADVTHDARDIAASISSGSYPTAGMVILPCSIKTLSGIVHSYTDGLLTRAADVILKERRPLVLCVRETPLHIGHLRLMTQAAEIGAVIMPPVPAFYHLPQTLDDVINQTVNRVLDQFDIPLPHDLFVRWQGA.

FMN contacts are provided by residues Gly-10–Ser-12, Ser-37, Ser-88–Thr-91, and Arg-123. 2 residues coordinate dimethylallyl phosphate: Tyr-153 and Arg-169.

It belongs to the UbiX/PAD1 family.

It carries out the reaction dimethylallyl phosphate + FMNH2 = prenylated FMNH2 + phosphate. It functions in the pathway cofactor biosynthesis; ubiquinone biosynthesis. Its function is as follows. Flavin prenyltransferase that catalyzes the synthesis of the prenylated FMN cofactor (prenyl-FMN) for 4-hydroxy-3-polyprenylbenzoic acid decarboxylase UbiD. The prenyltransferase is metal-independent and links a dimethylallyl moiety from dimethylallyl monophosphate (DMAP) to the flavin N5 and C6 atoms of FMN. The polypeptide is Flavin prenyltransferase UbiX (Salmonella typhi).